We begin with the raw amino-acid sequence, 786 residues long: m7GpppN-mRNA hydrolase dcap-2 (786 aa).

Residues 25–61 show a composition bias toward polar residues; sequence QKQNKSTEEPPSSVQKLLASLQQAQNKSDLSEQPSTS. The tract at residues 25–148 is disordered; sequence QKQNKSTEEP…QQQQQYKGPR (124 aa). Residues 62–72 show a composition bias toward basic residues; the sequence is KPKKNEKRKKA. 2 stretches are compositionally biased toward polar residues: residues 101 to 111 and 118 to 133; these read MQQQAENARIS and QVST…TAPE. Over residues 134-144 the composition is skewed to low complexity; that stretch reads QQNYQQQQQQY. One can recognise a Nudix hydrolase domain in the interval 238 to 366; the sequence is STVPTYGAIL…LPAYLQGNKF (129 aa). Residues 273–294 carry the Nudix box motif; sequence GKINQAEPPRDAAIRETFEETG. Glu288 and Glu292 together coordinate Mg(2+). 2 disordered regions span residues 556 to 576 and 623 to 655; these read IMHS…TPTA and ISST…SSQV. Polar residues-rich tracts occupy residues 623-632 and 646-655; these read ISSTQKQSIP and SASLSGSSQV.

Belongs to the Nudix hydrolase family. DCP2 subfamily. In terms of assembly, may be a component of the decapping complex composed of dcap-1 and dcap-2. Mg(2+) serves as cofactor. It depends on Mn(2+) as a cofactor. As to expression, expressed in sensory neurons.

The protein resides in the cytoplasmic granule. The protein localises to the cytoplasm. It localises to the perinuclear region. It carries out the reaction a 5'-end (N(7)-methyl 5'-triphosphoguanosine)-ribonucleoside in mRNA + H2O = N(7)-methyl-GDP + a 5'-end phospho-ribonucleoside in mRNA + 2 H(+). The catalysed reaction is a 5'-end (N(2),N(2),N(7)-trimethyl 5'-triphosphoguanosine)-ribonucleoside in mRNA + H2O = N(2),N(2),N(7)-trimethyl-GDP + a 5'-end phospho-ribonucleoside in mRNA + 2 H(+). Inhibited by capped and uncapped RNA. Not inhibited by dinucleotide cap or methylated nucleotide analogs. Functionally, decapping metalloenzyme that catalyzes the cleavage of the cap structure on mRNAs. Removes the 7-methyl guanine cap structure from mRNA molecules, yielding a 5'-phosphorylated mRNA fragment and 7m-GDP. RNA-decapping enzyme although it does not bind the RNA cap. May contribute to gene regulation in multiple RNA pathways including monomethylguanosine- and trimethylguanosine-capped RNAs. In oocytes, may play a role in the response to stress induced by heat shock, osmotic stress and anoxia. Required for the developmental axon guidance and regrowth of PLM touch receptor neurons. Early in embryogenesis, plays a role in ciliary shape formation in sensory neurons. Promotes survival at high temperatures. In Caenorhabditis elegans, this protein is m7GpppN-mRNA hydrolase dcap-2.